The chain runs to 240 residues: Large ribosomal subunit protein bL25 (240 aa).

Disordered stretches follow at residues 1–21 (MAEN…PARR) and 204–240 (GAAP…KAKK). Residues 204-229 (GAAPAAGAAAPAGGAAPAAGAAPAKG) are compositionally biased toward low complexity. Residues 230–240 (GEAKGGDKAKK) are compositionally biased toward basic and acidic residues.

It belongs to the bacterial ribosomal protein bL25 family. CTC subfamily. Part of the 50S ribosomal subunit; part of the 5S rRNA/L5/L18/L25 subcomplex. Contacts the 5S rRNA. Binds to the 5S rRNA independently of L5 and L18.

Functionally, this is one of the proteins that binds to the 5S RNA in the ribosome where it forms part of the central protuberance. The protein is Large ribosomal subunit protein bL25 of Anaeromyxobacter dehalogenans (strain 2CP-1 / ATCC BAA-258).